We begin with the raw amino-acid sequence, 538 residues long: Chaperonin GroEL (538 aa).

ATP-binding positions include 29–32 (TLGP), 86–90 (DGTTT), glycine 413, 476–478 (NAA), and aspartate 492.

This sequence belongs to the chaperonin (HSP60) family. In terms of assembly, forms a cylinder of 14 subunits composed of two heptameric rings stacked back-to-back. Interacts with the co-chaperonin GroES.

The protein localises to the cytoplasm. The enzyme catalyses ATP + H2O + a folded polypeptide = ADP + phosphate + an unfolded polypeptide.. In terms of biological role, together with its co-chaperonin GroES, plays an essential role in assisting protein folding. The GroEL-GroES system forms a nano-cage that allows encapsulation of the non-native substrate proteins and provides a physical environment optimized to promote and accelerate protein folding. The chain is Chaperonin GroEL from Bacillus sp. (strain PS3).